Reading from the N-terminus, the 319-residue chain is Replication factor C small subunit 2 (319 aa).

An ATP-binding site is contributed by Gly-44–Thr-51.

It belongs to the activator 1 small subunits family. RfcS subfamily. As to quaternary structure, heteromultimer composed of small subunits (RfcS) and large subunits (RfcL).

In terms of biological role, part of the RFC clamp loader complex which loads the PCNA sliding clamp onto DNA. This is Replication factor C small subunit 2 from Pyrobaculum aerophilum (strain ATCC 51768 / DSM 7523 / JCM 9630 / CIP 104966 / NBRC 100827 / IM2).